The chain runs to 83 residues: BmKBT-like peptide (83 aa).

Positions 1 to 19 (MKAALLLVISTLMLIGVLT) are cleaved as a signal peptide. Residues 21 to 81 (KSGYPIQHDG…TWSRETNKCR (61 aa)) enclose the LCN-type CS-alpha/beta domain. Disulfide bonds link C31-C80, C35-C54, C41-C61, and C45-C63. Position 83 (K83) is a propeptide, removed by a carboxypeptidase.

This sequence belongs to the long (4 C-C) scorpion toxin superfamily. Sodium channel inhibitor family. Beta subfamily. Expressed by the venom gland.

It is found in the secreted. Its function is as follows. Sodium channel inhibitor. Possesses potent toxicity in mice but induces only paralysis in cotton bollworm. This is BmKBT-like peptide from Olivierus martensii (Manchurian scorpion).